Here is a 513-residue protein sequence, read N- to C-terminus: Cytochrome P450 94A2 (513 aa).

A helical transmembrane segment spans residues Ile-7 to Thr-24. Residue Cys-455 participates in heme binding.

Belongs to the cytochrome P450 family. Requires heme as cofactor. As to expression, weakly expressed in seedlings.

The protein resides in the endoplasmic reticulum membrane. Catalyzes the omega-hydroxylation of various fatty acids (FA). The substrate specificity is higher for myristate &gt; laurate = palmitate (C14&gt;C16=C12). This Vicia sativa (Spring vetch) protein is Cytochrome P450 94A2 (CYP94A2).